A 174-amino-acid chain; its full sequence is Nucleoside-triphosphatase THEP1 (174 aa).

Residues 7–14 and 98–105 each bind ATP; these read GRPGSGKS and CIIIDEIG.

It belongs to the THEP1 NTPase family.

It catalyses the reaction a ribonucleoside 5'-triphosphate + H2O = a ribonucleoside 5'-diphosphate + phosphate + H(+). In terms of biological role, has nucleotide phosphatase activity towards ATP, GTP, CTP, TTP and UTP. May hydrolyze nucleoside diphosphates with lower efficiency. This chain is Nucleoside-triphosphatase THEP1, found in Methanothermobacter thermautotrophicus (strain ATCC 29096 / DSM 1053 / JCM 10044 / NBRC 100330 / Delta H) (Methanobacterium thermoautotrophicum).